Reading from the N-terminus, the 105-residue chain is Thioredoxin (105 aa).

Positions 2-105 constitute a Thioredoxin domain; the sequence is VKIVGDLTEF…KLEEAIKKYM (104 aa). Residues Cys-32 and Cys-35 each act as nucleophile in the active site. A disulfide bond links Cys-32 and Cys-35. Cys-69 and Cys-73 each carry S-nitrosocysteine.

The protein belongs to the thioredoxin family. Post-translationally, may be nitrosylated on several cysteine residues, depending on the oxidation state. Nitrosylated Cys-73 may serve as donor for nitrosylation of target proteins.

The protein resides in the nucleus. Its subcellular location is the cytoplasm. It is found in the secreted. Functionally, participates in various redox reactions through the reversible oxidation of its active center dithiol to a disulfide and catalyzes dithiol-disulfide exchange reactions. Plays a role in the reversible S-nitrosylation of cysteine residues in target proteins, and thereby contributes to the response to intracellular nitric oxide. Nitrosylates the active site Cys of CASP3 in response to nitric oxide (NO), and thereby inhibits caspase-3 activity. Induces the FOS/JUN AP-1 DNA binding activity in ionizing radiation (IR) cells through its oxidation/reduction status and stimulates AP-1 transcriptional activity. The polypeptide is Thioredoxin (TXN) (Ophiophagus hannah (King cobra)).